The following is a 309-amino-acid chain: MTLRNSSSVTEFILVGLSEQPELQLPLFLLFLGIYVFTVVGNLGLITLIGINPSLHTPMYFFLFNLSFIDLCYSCVFTPKMLNDFVSESIISYVGCMTQLFFFCFFVNSECYVLVSMAYDRYVAICNPLLYMVTMSPRVCFLLMFGSYVVGFAGAMAHTGSMLRLTFCDSNVIDHYLCDVLPLLQLSCTSTHVSELVFFIVVGVITMLSSISIVISYALILSNILCIPSAEGRSKAFSTWGSHIIAVALFFGSGTFTYLTTSFPGSMNHGRFASVFYTNVVPMLNPSIYSLRNKDDKLALGKTLKRVLF.

Residues 1 to 25 (MTLRNSSSVTEFILVGLSEQPELQL) lie on the Extracellular side of the membrane. N-linked (GlcNAc...) asparagine glycosylation occurs at N5. A helical membrane pass occupies residues 26–46 (PLFLLFLGIYVFTVVGNLGLI). Residues 47 to 54 (TLIGINPS) are Cytoplasmic-facing. The helical transmembrane segment at 55-75 (LHTPMYFFLFNLSFIDLCYSC) threads the bilayer. The Extracellular portion of the chain corresponds to 76–98 (VFTPKMLNDFVSESIISYVGCMT). Cysteines 96 and 188 form a disulfide. Residues 99–119 (QLFFFCFFVNSECYVLVSMAY) traverse the membrane as a helical segment. The Cytoplasmic segment spans residues 120-138 (DRYVAICNPLLYMVTMSPR). Residues 139–159 (VCFLLMFGSYVVGFAGAMAHT) form a helical membrane-spanning segment. At 160-196 (GSMLRLTFCDSNVIDHYLCDVLPLLQLSCTSTHVSEL) the chain is on the extracellular side. The chain crosses the membrane as a helical span at residues 197 to 216 (VFFIVVGVITMLSSISIVIS). Residues 217–236 (YALILSNILCIPSAEGRSKA) lie on the Cytoplasmic side of the membrane. Residues 237 to 257 (FSTWGSHIIAVALFFGSGTFT) traverse the membrane as a helical segment. The Extracellular segment spans residues 258–270 (YLTTSFPGSMNHG). The helical transmembrane segment at 271–291 (RFASVFYTNVVPMLNPSIYSL) threads the bilayer. The Cytoplasmic segment spans residues 292–309 (RNKDDKLALGKTLKRVLF).

The protein belongs to the G-protein coupled receptor 1 family.

The protein localises to the cell membrane. Its function is as follows. Odorant receptor. This chain is Olfactory receptor 8B4 (OR8B4), found in Homo sapiens (Human).